The following is a 201-amino-acid chain: MAEPGFFNAMLIGALIFGYVLGSIPFGLILTRLAGLGDVRAIGSGNIGATNVLRTGNKKLAAATLILDALKGTAAALIAAHFGQNAAIAAGFGAFIGHLFPVWIGFKGGKGVATYLGVLIGLAWAGALVFAAAWIVTALLARYSSLSALVASLVVPIALYSRGNQALAALFAIMTVIVFIKHRANISRLLNGTESKIGAKG.

The next 5 helical transmembrane spans lie at Met10 to Leu30, Leu60 to Ala80, Ala86 to Phe106, Leu116 to Val136, and Ala166 to Ile186.

This sequence belongs to the PlsY family. Probably interacts with PlsX.

It is found in the cell inner membrane. The catalysed reaction is an acyl phosphate + sn-glycerol 3-phosphate = a 1-acyl-sn-glycero-3-phosphate + phosphate. It functions in the pathway lipid metabolism; phospholipid metabolism. Its function is as follows. Catalyzes the transfer of an acyl group from acyl-phosphate (acyl-PO(4)) to glycerol-3-phosphate (G3P) to form lysophosphatidic acid (LPA). This enzyme utilizes acyl-phosphate as fatty acyl donor, but not acyl-CoA or acyl-ACP. The polypeptide is Glycerol-3-phosphate acyltransferase (Brucella melitensis biotype 2 (strain ATCC 23457)).